We begin with the raw amino-acid sequence, 189 residues long: MYLVVGLGNIGKEYKKTRHNIGFDVVDIVAEKYNIEINRQKFKGSYGEGRIGNEKIILLKPSTYMNLSGESVIEAANFYKIDKENIIVIYDDMSIDIGKLRVRGKGSAGGHNGIKNIIQHLNSDIFPRVRVGIGQPDENVVNYVLGKFSKDQREVIEKVLAMSAKACISIVEDGVTEAMNKYNGVKIEV.

Y14 provides a ligand contact to tRNA. The Proton acceptor role is filled by H19. TRNA-binding residues include Y64, N66, and N112.

The protein belongs to the PTH family. As to quaternary structure, monomer.

The protein localises to the cytoplasm. The catalysed reaction is an N-acyl-L-alpha-aminoacyl-tRNA + H2O = an N-acyl-L-amino acid + a tRNA + H(+). Functionally, hydrolyzes ribosome-free peptidyl-tRNAs (with 1 or more amino acids incorporated), which drop off the ribosome during protein synthesis, or as a result of ribosome stalling. Its function is as follows. Catalyzes the release of premature peptidyl moieties from peptidyl-tRNA molecules trapped in stalled 50S ribosomal subunits, and thus maintains levels of free tRNAs and 50S ribosomes. This chain is Peptidyl-tRNA hydrolase, found in Clostridium botulinum (strain Loch Maree / Type A3).